The chain runs to 242 residues: Glucosamine-6-phosphate deaminase (242 aa).

Aspartate 67 serves as the catalytic Proton acceptor; for enolization step. The For ring-opening step role is filled by asparagine 137. Residue histidine 139 is the Proton acceptor; for ring-opening step of the active site. Glutamate 144 functions as the For ring-opening step in the catalytic mechanism.

This sequence belongs to the glucosamine/galactosamine-6-phosphate isomerase family. NagB subfamily.

It carries out the reaction alpha-D-glucosamine 6-phosphate + H2O = beta-D-fructose 6-phosphate + NH4(+). It participates in amino-sugar metabolism; N-acetylneuraminate degradation; D-fructose 6-phosphate from N-acetylneuraminate: step 5/5. Functionally, catalyzes the reversible isomerization-deamination of glucosamine 6-phosphate (GlcN6P) to form fructose 6-phosphate (Fru6P) and ammonium ion. The protein is Glucosamine-6-phosphate deaminase of Staphylococcus saprophyticus subsp. saprophyticus (strain ATCC 15305 / DSM 20229 / NCIMB 8711 / NCTC 7292 / S-41).